We begin with the raw amino-acid sequence, 314 residues long: Methionyl-tRNA formyltransferase (314 aa).

Residue 113–116 (SLLP) coordinates (6S)-5,6,7,8-tetrahydrofolate.

Belongs to the Fmt family.

The enzyme catalyses L-methionyl-tRNA(fMet) + (6R)-10-formyltetrahydrofolate = N-formyl-L-methionyl-tRNA(fMet) + (6S)-5,6,7,8-tetrahydrofolate + H(+). Attaches a formyl group to the free amino group of methionyl-tRNA(fMet). The formyl group appears to play a dual role in the initiator identity of N-formylmethionyl-tRNA by promoting its recognition by IF2 and preventing the misappropriation of this tRNA by the elongation apparatus. The polypeptide is Methionyl-tRNA formyltransferase (Pseudomonas aeruginosa (strain ATCC 15692 / DSM 22644 / CIP 104116 / JCM 14847 / LMG 12228 / 1C / PRS 101 / PAO1)).